Here is a 476-residue protein sequence, read N- to C-terminus: Eukaryotic translation initiation factor 3 subunit L (476 aa).

The PCI domain maps to 257–452 (DAIRMFSHIL…DLDYALENDL (196 aa)).

Belongs to the eIF-3 subunit L family. In terms of assembly, component of the eukaryotic translation initiation factor 3 (eIF-3) complex.

It is found in the cytoplasm. Its function is as follows. Component of the eukaryotic translation initiation factor 3 (eIF-3) complex, which is involved in protein synthesis of a specialized repertoire of mRNAs and, together with other initiation factors, stimulates binding of mRNA and methionyl-tRNAi to the 40S ribosome. The eIF-3 complex specifically targets and initiates translation of a subset of mRNAs involved in cell proliferation. This chain is Eukaryotic translation initiation factor 3 subunit L, found in Aspergillus fumigatus (strain CBS 144.89 / FGSC A1163 / CEA10) (Neosartorya fumigata).